Here is a 235-residue protein sequence, read N- to C-terminus: Flavonoid 3',5'-methyltransferase (235 aa).

Residues valine 51, glutamate 73, 75-76, serine 81, aspartate 99, and alanine 128 contribute to the S-adenosyl-L-methionine site; that span reads GV. Aspartate 151 contributes to the a divalent metal cation binding site. Aspartate 153 is a binding site for S-adenosyl-L-methionine. Residues aspartate 177 and asparagine 178 each coordinate a divalent metal cation.

The protein belongs to the class I-like SAM-binding methyltransferase superfamily. Cation-dependent O-methyltransferase family. CCoAMT subfamily. Requires a divalent metal cation as cofactor.

Its subcellular location is the cytoplasm. It carries out the reaction S-adenosyl-L-methionine + a 3'-hydroxyflavonoid = S-adenosyl-L-homocysteine + a 3'-methoxyflavonoid.. The enzyme catalyses S-adenosyl-L-methionine + a 5'-hydroxy-3'-methoxyflavonoid = S-adenosyl-L-homocysteine + a 3',5'-dimethoxyflavonoid.. The protein operates within pigment biosynthesis; anthocyanin biosynthesis. Mediates O-methylation of anthocyanins. Anthocyanins are major pigments in grapes: at ripening initiation in red grapevine berries, the exocarp turns color from green to red and then to purple due to the accumulation and extent of methylation of anthocyanins. Catalyzes both 3' and 5' O-methylation of anthocyanins, with a preference for glycosylated substrates. Active on both anthocyanins and flavonols in vitro. Most active with delphinidin 3-glucoside but also acts on cyanidin 3-glucoside, cyanidin, myricetin, quercetin and quercetin 3-glucoside. Not able to methylate flavan type skeletons with chiral centers, such as catechins or dihydroquercetin. The sequence is that of Flavonoid 3',5'-methyltransferase (FAOMT) from Vitis vinifera (Grape).